The following is a 523-amino-acid chain: Na(+)/H(+) antiporter NhaB (523 aa).

A run of 10 helical transmembrane segments spans residues 28–48 (FLIINPFIVALNPFVAGWLLV), 51–71 (FIFTLSMALKCYPLLPGGLLA), 89–109 (LSANLEVLLLLMFMVAGIYFV), 137–157 (MAAFLSAFLDALTVVAVVISI), 237–257 (FFIRMSAVSIPVLICGLATCV), 302–322 (AIICVWLIVGLAFHLAAVGLI), 347–367 (TESLPFTALLSVFFVVVAVII), 390–410 (LFYIANGVLSMVSDNVFVGTV), 445–465 (VATPNGQAAFLFLLTSTLAPL), and 476–496 (MALPYTIVLAGVGLLSTMYLL).

This sequence belongs to the NhaB Na(+)/H(+) (TC 2.A.34) antiporter family.

Its subcellular location is the cell inner membrane. It carries out the reaction 2 Na(+)(in) + 3 H(+)(out) = 2 Na(+)(out) + 3 H(+)(in). Functionally, na(+)/H(+) antiporter that extrudes sodium in exchange for external protons. The protein is Na(+)/H(+) antiporter NhaB of Tolumonas auensis (strain DSM 9187 / NBRC 110442 / TA 4).